We begin with the raw amino-acid sequence, 1036 residues long: Chitin synthase 1 (1036 aa).

The segment covering 1-10 has biased composition (pro residues); that stretch reads MDGPPSPTRV. Residues 1 to 153 are disordered; that stretch reads MDGPPSPTRV…RRPLPPAPLF (153 aa). An N-linked (GlcNAc...) asparagine glycan is attached at N38. A compositionally biased stretch (low complexity) spans 86–108; sequence PSIPLSSSNPRSPIRPSTPSRVS. N-linked (GlcNAc...) asparagine glycosylation is present at N179. The interval 189-229 is disordered; the sequence is RASLKSAHSYTTDSTFTEDDDITNEKLNHYGPAPEGRQDRR. A compositionally biased stretch (polar residues) spans 194-203; that stretch reads SAHSYTTDST. 7 helical membrane passes run 659–679, 699–719, 733–753, 776–796, 808–828, 908–928, and 945–967; these read FISL…FYFV, IFVI…ILSL, TMVT…YIVI, IFTN…LMSF, SAQY…YAFC, YVVA…SEAY, and WSVA…INIV. The tract at residues 994-1019 is disordered; it reads AGLGSGFSESGKTGITSGSGMSGMSL. Low complexity predominate over residues 1001–1019; sequence SESGKTGITSGSGMSGMSL.

The protein belongs to the chitin synthase family. Class II subfamily.

It localises to the cell membrane. It carries out the reaction [(1-&gt;4)-N-acetyl-beta-D-glucosaminyl](n) + UDP-N-acetyl-alpha-D-glucosamine = [(1-&gt;4)-N-acetyl-beta-D-glucosaminyl](n+1) + UDP + H(+). Functionally, polymerizes chitin, a structural polymer of the cell wall and septum, by transferring the sugar moiety of UDP-GlcNAc to the non-reducing end of the growing chitin polymer. CHS1 mainly responsible for normal yeast cell reproductive growth. The sequence is that of Chitin synthase 1 from Exophiala dermatitidis (strain ATCC 34100 / CBS 525.76 / NIH/UT8656) (Black yeast).